Consider the following 370-residue polypeptide: Proline-rich protein 5-like (370 aa).

A Phosphoserine modification is found at serine 28. Disordered regions lie at residues 312-346 (LGEE…LDSP) and 351-370 (LEDV…ASLS).

Belongs to the PROTOR family. As to quaternary structure, interacts with the mammalian target of rapamycin complex 2 (mTORC2) which contains MTOR, MLST8, PRR5, RICTOR, MAPKAP1 and DEPTOR. Interacts with RFFL. Interacts (via C-terminus) with ZFP36 (via C-terminus); this interaction may accelerate ZFP36-mediated mRNA decay during stress. Interacts with RICTOR. Post-translationally, ubiquitinated. Ubiquitination by RFFL promotes proteasomal degradation of PRR5L thereby modifying the substrate-specific activity of the mTORC2 complex. Ubiquitination by RFFL is stimulated by LPA/lysophosphatidic acid.

Functionally, associates with the mTORC2 complex that regulates cellular processes including survival and organization of the cytoskeleton. Regulates the activity of the mTORC2 complex in a substrate-specific manner preventing for instance the specific phosphorylation of PKCs and thereby controlling cell migration. Plays a role in the stimulation of ZFP36-mediated mRNA decay of several ZFP36-associated mRNAs, such as TNF-alpha and GM-CSF, in response to stress. Required for ZFP36 localization to cytoplasmic stress granule (SG) and P-body (PB) in response to stress. The polypeptide is Proline-rich protein 5-like (Prr5l) (Mus musculus (Mouse)).